Consider the following 216-residue polypeptide: Thiamine-phosphate synthase (216 aa).

4-amino-2-methyl-5-(diphosphooxymethyl)pyrimidine contacts are provided by residues 41–45 (QLREK) and Asp-77. Positions 78 and 97 each coordinate Mg(2+). Ser-116 contributes to the 4-amino-2-methyl-5-(diphosphooxymethyl)pyrimidine binding site. 143–145 (TTS) is a binding site for 2-[(2R,5Z)-2-carboxy-4-methylthiazol-5(2H)-ylidene]ethyl phosphate. Lys-146 lines the 4-amino-2-methyl-5-(diphosphooxymethyl)pyrimidine pocket. 2-[(2R,5Z)-2-carboxy-4-methylthiazol-5(2H)-ylidene]ethyl phosphate-binding positions include Gly-174 and 194 to 195 (IS).

Belongs to the thiamine-phosphate synthase family. Mg(2+) serves as cofactor.

The catalysed reaction is 2-[(2R,5Z)-2-carboxy-4-methylthiazol-5(2H)-ylidene]ethyl phosphate + 4-amino-2-methyl-5-(diphosphooxymethyl)pyrimidine + 2 H(+) = thiamine phosphate + CO2 + diphosphate. It carries out the reaction 2-(2-carboxy-4-methylthiazol-5-yl)ethyl phosphate + 4-amino-2-methyl-5-(diphosphooxymethyl)pyrimidine + 2 H(+) = thiamine phosphate + CO2 + diphosphate. The enzyme catalyses 4-methyl-5-(2-phosphooxyethyl)-thiazole + 4-amino-2-methyl-5-(diphosphooxymethyl)pyrimidine + H(+) = thiamine phosphate + diphosphate. It functions in the pathway cofactor biosynthesis; thiamine diphosphate biosynthesis; thiamine phosphate from 4-amino-2-methyl-5-diphosphomethylpyrimidine and 4-methyl-5-(2-phosphoethyl)-thiazole: step 1/1. Its function is as follows. Condenses 4-methyl-5-(beta-hydroxyethyl)thiazole monophosphate (THZ-P) and 2-methyl-4-amino-5-hydroxymethyl pyrimidine pyrophosphate (HMP-PP) to form thiamine monophosphate (TMP). The protein is Thiamine-phosphate synthase of Pediococcus pentosaceus (strain ATCC 25745 / CCUG 21536 / LMG 10740 / 183-1w).